The chain runs to 206 residues: Ion-translocating oxidoreductase complex subunit G (206 aa).

The helical transmembrane segment at 9-29 (GITLALFAAGSTGLTAAINQM) threads the bilayer. T174 carries the FMN phosphoryl threonine modification.

It belongs to the RnfG family. As to quaternary structure, the complex is composed of six subunits: RsxA, RsxB, RsxC, RsxD, RsxE and RsxG. The cofactor is FMN.

Its subcellular location is the cell inner membrane. In terms of biological role, part of a membrane-bound complex that couples electron transfer with translocation of ions across the membrane. Required to maintain the reduced state of SoxR. The sequence is that of Ion-translocating oxidoreductase complex subunit G from Escherichia coli O157:H7.